A 492-amino-acid chain; its full sequence is MGKNLTKRSEDYSKWYNELVVKADLAENSAVRGCMVIKPYGYAIWEKMQAELDRMFKETGHQNAYFPLFVPKHLFEAEEKNAEGFAKECAVVTHYRLKNDPDKPGKLMVDPDAKLEEELVVRPTSEAIIWNTYKNWIQSYRDLPIKVNQWANVVRWEMRTRLFLRTAEFLWQEGHTAHATKDEALEETELMNNIYAEFAENFMAMPVVKGSKTESERFAGALETYCIEALMQDGKALQAGTSHFLGQNFAEAFDVKFATKEGGLEHVWATSWGVSTRLMGALIMTHSDDNGLVLPPNLAPIQVVIVPIYRSEEQLDQISEVANELVKELRAVGVSVKFDNNDNQKPGWKFAQYELQGVPLRLAIGPKDLEKGTVELARRDTLTKEFVNRSEVVEKIKALMTEIQDSLFDKAKQYRNEHITEVDSFDDFKKVLKEKGGFISAHWDGTPETENKIKDLTKATIRCVPFDRKEGAGECVLTGNPSEGRVLFAKAY.

This sequence belongs to the class-II aminoacyl-tRNA synthetase family. ProS type 3 subfamily. In terms of assembly, homodimer.

Its subcellular location is the cytoplasm. It carries out the reaction tRNA(Pro) + L-proline + ATP = L-prolyl-tRNA(Pro) + AMP + diphosphate. Functionally, catalyzes the attachment of proline to tRNA(Pro) in a two-step reaction: proline is first activated by ATP to form Pro-AMP and then transferred to the acceptor end of tRNA(Pro). In Christiangramia forsetii (strain DSM 17595 / CGMCC 1.15422 / KT0803) (Gramella forsetii), this protein is Proline--tRNA ligase.